Reading from the N-terminus, the 882-residue chain is Alanine--tRNA ligase (882 aa).

Residues His570, His574, Cys672, and His676 each contribute to the Zn(2+) site.

It belongs to the class-II aminoacyl-tRNA synthetase family. Requires Zn(2+) as cofactor.

Its subcellular location is the cytoplasm. It catalyses the reaction tRNA(Ala) + L-alanine + ATP = L-alanyl-tRNA(Ala) + AMP + diphosphate. Its function is as follows. Catalyzes the attachment of alanine to tRNA(Ala) in a two-step reaction: alanine is first activated by ATP to form Ala-AMP and then transferred to the acceptor end of tRNA(Ala). Also edits incorrectly charged Ser-tRNA(Ala) and Gly-tRNA(Ala) via its editing domain. This is Alanine--tRNA ligase from Xanthomonas axonopodis pv. citri (strain 306).